Reading from the N-terminus, the 279-residue chain is 3-methyl-2-oxobutanoate hydroxymethyltransferase (279 aa).

Mg(2+) contacts are provided by D53 and D92. 3-methyl-2-oxobutanoate-binding positions include 53–54 (DS), D92, and K122. E124 is a Mg(2+) binding site. E191 functions as the Proton acceptor in the catalytic mechanism.

Belongs to the PanB family. As to quaternary structure, homodecamer; pentamer of dimers. Mg(2+) serves as cofactor.

It is found in the cytoplasm. It carries out the reaction 3-methyl-2-oxobutanoate + (6R)-5,10-methylene-5,6,7,8-tetrahydrofolate + H2O = 2-dehydropantoate + (6S)-5,6,7,8-tetrahydrofolate. Its pathway is cofactor biosynthesis; (R)-pantothenate biosynthesis; (R)-pantoate from 3-methyl-2-oxobutanoate: step 1/2. Catalyzes the reversible reaction in which hydroxymethyl group from 5,10-methylenetetrahydrofolate is transferred onto alpha-ketoisovalerate to form ketopantoate. This chain is 3-methyl-2-oxobutanoate hydroxymethyltransferase, found in Maricaulis maris (strain MCS10) (Caulobacter maris).